The following is a 213-amino-acid chain: tRNA (guanine-N(7)-)-methyltransferase (213 aa).

Residues glutamate 44, glutamate 69, aspartate 96, and aspartate 118 each contribute to the S-adenosyl-L-methionine site. Aspartate 118 is an active-site residue. Lysine 122 lines the substrate pocket. Residues 124 to 129 (RHEKRR) are interaction with RNA. Residues aspartate 154 and 191–194 (TEYE) contribute to the substrate site.

The protein belongs to the class I-like SAM-binding methyltransferase superfamily. TrmB family. As to quaternary structure, homodimer.

The catalysed reaction is guanosine(46) in tRNA + S-adenosyl-L-methionine = N(7)-methylguanosine(46) in tRNA + S-adenosyl-L-homocysteine. Its pathway is tRNA modification; N(7)-methylguanine-tRNA biosynthesis. Functionally, catalyzes the formation of N(7)-methylguanine at position 46 (m7G46) in tRNA. The polypeptide is tRNA (guanine-N(7)-)-methyltransferase (Bacillus subtilis (strain 168)).